We begin with the raw amino-acid sequence, 60 residues long: Large ribosomal subunit protein uL30 (60 aa).

The protein belongs to the universal ribosomal protein uL30 family. Part of the 50S ribosomal subunit.

This Flavobacterium johnsoniae (strain ATCC 17061 / DSM 2064 / JCM 8514 / BCRC 14874 / CCUG 350202 / NBRC 14942 / NCIMB 11054 / UW101) (Cytophaga johnsonae) protein is Large ribosomal subunit protein uL30.